The sequence spans 462 residues: GTPase Der (462 aa).

2 EngA-type G domains span residues 2–164 (QKVI…EEKV) and 198–369 (IRVG…KNYT). Residues 8-15 (GKPNVGKS), 55-59 (DSGGL), 116-119 (NKID), 204-211 (GRVNVGKS), 251-255 (DTAGI), and 315-318 (NKWD) contribute to the GTP site. Residues 370–454 (QKIQTSKLNE…PIVLIPKKRG (85 aa)) form the KH-like domain.

The protein belongs to the TRAFAC class TrmE-Era-EngA-EngB-Septin-like GTPase superfamily. EngA (Der) GTPase family. In terms of assembly, associates with the 50S ribosomal subunit.

In terms of biological role, GTPase that plays an essential role in the late steps of ribosome biogenesis. This Campylobacter concisus (strain 13826) protein is GTPase Der.